A 146-amino-acid polypeptide reads, in one-letter code: Large ribosomal subunit protein uL15 (146 aa).

The interval 1 to 51 (MKLHELQPAAGSRKVRNRVGRGTSSGNGKTAGRGQKGQKARSGGGVRLGFE) is disordered. Composition is skewed to gly residues over residues 23-35 (TSSG…GRGQ) and 42-51 (SGGGVRLGFE).

It belongs to the universal ribosomal protein uL15 family. Part of the 50S ribosomal subunit.

Functionally, binds to the 23S rRNA. The chain is Large ribosomal subunit protein uL15 from Streptococcus gordonii (strain Challis / ATCC 35105 / BCRC 15272 / CH1 / DL1 / V288).